Reading from the N-terminus, the 290-residue chain is Festuclavine dehydrogenase easG (290 aa).

This sequence belongs to the fgaFS/easG family.

The enzyme catalyses festuclavine + NAD(+) = 6,8-dimethyl-6,7-didehydroergoline + NADH + H(+). Its pathway is alkaloid biosynthesis; ergot alkaloid biosynthesis. Its function is as follows. Festuclavine dehydrogenase; part of the gene cluster that mediates the biosynthesis of fumiclavanine C, a fungal ergot alkaloid. DmaW catalyzes the first step of ergot alkaloid biosynthesis by condensing dimethylallyl diphosphate (DMAP) and tryptophan to form 4-dimethylallyl-L-tryptophan. The second step is catalyzed by the methyltransferase easF that methylates 4-dimethylallyl-L-tryptophan in the presence of S-adenosyl-L-methionine, resulting in the formation of 4-dimethylallyl-L-abrine. The catalase easC and the FAD-dependent oxidoreductase easE then transform 4-dimethylallyl-L-abrine to chanoclavine-I which is further oxidized by EasD in the presence of NAD(+), resulting in the formation of chanoclavine-I aldehyde. EasA reduces chanoclavine-I aldehyde to dihydrochanoclavine-I aldehyde that spontaneously dehydrates to form 6,8-dimethyl-6,7-didehydroergoline. EasG then catalyzes the reduction of 6,8-dimethyl-6,7-didehydroergoline to form festuclavine. Hydrolysis of festuclavine by easM then leads to the formation of fumigaclavine B which is in turn acetylated by easN to fumigaclavine A. Finally, easL catalyzes the conversion of fumigaclavine A into fumigaclavine C by attaching a dimethylallyl moiety to C-2 of the indole nucleus. In Aspergillus fumigatus (strain ATCC MYA-4609 / CBS 101355 / FGSC A1100 / Af293) (Neosartorya fumigata), this protein is Festuclavine dehydrogenase easG.